The following is a 134-amino-acid chain: Large ribosomal subunit protein uL14 (134 aa).

It belongs to the universal ribosomal protein uL14 family. Part of the 50S ribosomal subunit. Forms a cluster with proteins L3 and L19. In the 70S ribosome, L14 and L19 interact and together make contacts with the 16S rRNA in bridges B5 and B8.

Binds to 23S rRNA. Forms part of two intersubunit bridges in the 70S ribosome. The chain is Large ribosomal subunit protein uL14 from Deinococcus geothermalis (strain DSM 11300 / CIP 105573 / AG-3a).